Reading from the N-terminus, the 182-residue chain is D-lyxose ketol-isomerase (182 aa).

Mn(2+)-binding residues include histidine 74, histidine 76, glutamate 87, and histidine 142.

The protein belongs to the D-lyxose ketol-isomerase family. Homodimer. The cofactor is Mn(2+).

The enzyme catalyses D-lyxose = D-xylulose. Functionally, sugar isomerase that catalyzes the reversible isomerization of D-lyxose to D-xylulose. Shows weak activity with D-mannose and L-ribose. The polypeptide is D-lyxose ketol-isomerase (Cohnella laeviribosi).